Here is a 489-residue protein sequence, read N- to C-terminus: Betaine aldehyde dehydrogenase (489 aa).

Residues threonine 26 and aspartate 93 each contribute to the K(+) site. 150 to 152 (GAW) contributes to the NAD(+) binding site. Residue lysine 162 is the Charge relay system of the active site. 176–179 (KPSE) is an NAD(+) binding site. Position 180 (valine 180) interacts with K(+). Residue 229 to 232 (GVET) coordinates NAD(+). Position 245 (leucine 245) interacts with K(+). Glutamate 251 functions as the Proton acceptor in the catalytic mechanism. The NAD(+) site is built by glycine 253, cysteine 285, and glutamate 386. Cysteine 285 serves as the catalytic Nucleophile. Cysteine 285 carries the post-translational modification Cysteine sulfenic acid (-SOH). K(+)-binding residues include lysine 456 and glycine 459. Glutamate 463 serves as the catalytic Charge relay system.

It belongs to the aldehyde dehydrogenase family. Dimer of dimers. Requires K(+) as cofactor.

The enzyme catalyses betaine aldehyde + NAD(+) + H2O = glycine betaine + NADH + 2 H(+). The protein operates within amine and polyamine biosynthesis; betaine biosynthesis via choline pathway; betaine from betaine aldehyde: step 1/1. In terms of biological role, involved in the biosynthesis of the osmoprotectant glycine betaine. Catalyzes the irreversible oxidation of betaine aldehyde to the corresponding acid. The protein is Betaine aldehyde dehydrogenase of Burkholderia mallei (strain SAVP1).